We begin with the raw amino-acid sequence, 418 residues long: Light-independent protochlorophyllide reductase subunit N (418 aa).

[4Fe-4S] cluster contacts are provided by cysteine 17, cysteine 42, and cysteine 103.

The protein belongs to the BchN/ChlN family. As to quaternary structure, protochlorophyllide reductase is composed of three subunits; ChlL, ChlN and ChlB. Forms a heterotetramer of two ChlB and two ChlN subunits. [4Fe-4S] cluster is required as a cofactor.

It catalyses the reaction chlorophyllide a + oxidized 2[4Fe-4S]-[ferredoxin] + 2 ADP + 2 phosphate = protochlorophyllide a + reduced 2[4Fe-4S]-[ferredoxin] + 2 ATP + 2 H2O. The protein operates within porphyrin-containing compound metabolism; chlorophyll biosynthesis (light-independent). Component of the dark-operative protochlorophyllide reductase (DPOR) that uses Mg-ATP and reduced ferredoxin to reduce ring D of protochlorophyllide (Pchlide) to form chlorophyllide a (Chlide). This reaction is light-independent. The NB-protein (ChlN-ChlB) is the catalytic component of the complex. The chain is Light-independent protochlorophyllide reductase subunit N from Prochlorococcus marinus (strain MIT 9313).